Reading from the N-terminus, the 284-residue chain is Tropomyosin (284 aa).

Positions 1 to 38 (MEAIKKKMQAMKLEKDNAVDRAETAEQQSREAALRAEK) are disordered. The stretch at 1–284 (MEAIKKKMQA…DQTFSELTGY (284 aa)) forms a coiled coil. The segment covering 12–38 (KLEKDNAVDRAETAEQQSREAALRAEK) has biased composition (basic and acidic residues).

The protein belongs to the tropomyosin family. In terms of assembly, homodimer.

Functionally, tropomyosin, in association with the troponin complex, plays a central role in the calcium dependent regulation of muscle contraction. This chain is Tropomyosin, found in Rhipicephalus microplus (Cattle tick).